Here is a 285-residue protein sequence, read N- to C-terminus: Protease HtpX homolog (285 aa).

2 helical membrane-spanning segments follow: residues 7–27 and 30–50; these read TAML…MIGG and GMTI…WFSD. A Zn(2+)-binding site is contributed by His-131. Residue Glu-132 is part of the active site. Residue His-135 participates in Zn(2+) binding. A run of 2 helical transmembrane segments spans residues 146-166 and 177-197; these read ITAT…FFGG and IAGI…QMAI. Glu-202 lines the Zn(2+) pocket.

It belongs to the peptidase M48B family. Zn(2+) is required as a cofactor.

It is found in the cell inner membrane. The sequence is that of Protease HtpX homolog from Burkholderia lata (strain ATCC 17760 / DSM 23089 / LMG 22485 / NCIMB 9086 / R18194 / 383).